The primary structure comprises 605 residues: Poly [ADP-ribose] polymerase 2-B (605 aa).

The tract at residues 96–122 is disordered; the sequence is NAAAAAAVTDGGDQDKTKSAKDDDGDD. Over residues 108-122 the composition is skewed to basic and acidic residues; the sequence is DQDKTKSAKDDDGDD. One can recognise a WGR domain in the interval 153–260; the sequence is AYHVLQVGDE…TKLETRTASF (108 aa). The 121-residue stretch at 250–370 folds into the PARP alpha-helical domain; that stretch reads ETKLETRTAS…EIEIAIKLLE (121 aa). Residues 378–605 enclose the PARP catalytic domain; that stretch reads HPLYARYKQF…NVNFNFKRWG (228 aa).

The protein belongs to the ARTD/PARP family.

The protein localises to the nucleus. The enzyme catalyses NAD(+) + (ADP-D-ribosyl)n-acceptor = nicotinamide + (ADP-D-ribosyl)n+1-acceptor + H(+).. It carries out the reaction L-aspartyl-[protein] + NAD(+) = 4-O-(ADP-D-ribosyl)-L-aspartyl-[protein] + nicotinamide. It catalyses the reaction L-glutamyl-[protein] + NAD(+) = 5-O-(ADP-D-ribosyl)-L-glutamyl-[protein] + nicotinamide. Its function is as follows. Involved in the base excision repair (BER) pathway, by catalyzing the poly(ADP-ribosyl)ation of a limited number of acceptor proteins involved in chromatin architecture and in DNA metabolism. This modification follows DNA damages and appears as an obligatory step in a detection/signaling pathway leading to the reparation of DNA strand breaks. The protein is Poly [ADP-ribose] polymerase 2-B (PARP2-B) of Oryza sativa subsp. japonica (Rice).